The sequence spans 319 residues: Pyrroline-5-carboxylate reductase 1, mitochondrial (319 aa).

N-acetylserine is present on serine 2. Residues 6–11 and serine 34 contribute to the NADP(+) site; that span reads IGAGQL. NADPH contacts are provided by alanine 8, glutamine 10, leucine 11, serine 34, aspartate 36, asparagine 56, valine 70, lysine 71, and alanine 97. NADP(+) is bound by residues asparagine 56, 69–72, and 95–97; these read AVKP and CAA. L-proline is bound at residue glutamate 164. Residue asparagine 230 participates in NADPH binding. The L-proline site is built by alanine 237 and threonine 238. Phosphoserine is present on residues serine 278 and serine 301. The tract at residues 294–319 is disordered; sequence SPAGTALSPSGHTKLLPRSLAPAGKD.

The protein belongs to the pyrroline-5-carboxylate reductase family. In terms of assembly, homodecamer; composed of 5 homodimers. Interacts with LTO1.

It is found in the mitochondrion. The catalysed reaction is L-proline + NADP(+) = (S)-1-pyrroline-5-carboxylate + NADPH + 2 H(+). The enzyme catalyses L-proline + NAD(+) = (S)-1-pyrroline-5-carboxylate + NADH + 2 H(+). The protein operates within amino-acid biosynthesis; L-proline biosynthesis; L-proline from L-glutamate 5-semialdehyde: step 1/1. With respect to regulation, subject to competitive inhibition by the reaction product proline. Subject to competitive inhibition by stearoyl coenzyme A. Its function is as follows. Oxidoreductase that catalyzes the last step in proline biosynthesis, which corresponds to the reduction of pyrroline-5-carboxylate to L-proline using NAD(P)H. At physiologic concentrations, has higher specific activity in the presence of NADH. Involved in the cellular response to oxidative stress. The protein is Pyrroline-5-carboxylate reductase 1, mitochondrial of Homo sapiens (Human).